Reading from the N-terminus, the 177-residue chain is Phosphatidylglycerol/phosphatidylinositol transfer protein (177 aa).

An N-terminal signal peptide occupies residues Met1–Ala17. Residues Phe18 to Asp30 constitute a propeptide that is removed on maturation.

This sequence belongs to the NPC2 family. In terms of assembly, monomer.

In terms of biological role, catalyzes the intermembrane transfer of phosphatidylglycerol and phosphatidylinositol. The polypeptide is Phosphatidylglycerol/phosphatidylinositol transfer protein (npc-2) (Neurospora crassa (strain ATCC 24698 / 74-OR23-1A / CBS 708.71 / DSM 1257 / FGSC 987)).